Consider the following 289-residue polypeptide: Phosphate import ATP-binding protein PstB (289 aa).

The disordered stretch occupies residues 1–37; that stretch reads MRSIDRPGGQAARPTIGSVAGASNTRTRDARSLPDTP. Residues 41–284 enclose the ABC transporter domain; the sequence is AAAENFSFYY…PVRRETEDYI (244 aa). 73–80 provides a ligand contact to ATP; it reads GPSGCGKS.

The protein belongs to the ABC transporter superfamily. Phosphate importer (TC 3.A.1.7) family. In terms of assembly, the complex is composed of two ATP-binding proteins (PstB), two transmembrane proteins (PstC and PstA) and a solute-binding protein (PstS).

It is found in the cell inner membrane. The catalysed reaction is phosphate(out) + ATP + H2O = ADP + 2 phosphate(in) + H(+). In terms of biological role, part of the ABC transporter complex PstSACB involved in phosphate import. Responsible for energy coupling to the transport system. The polypeptide is Phosphate import ATP-binding protein PstB (Aromatoleum aromaticum (strain DSM 19018 / LMG 30748 / EbN1) (Azoarcus sp. (strain EbN1))).